A 176-amino-acid polypeptide reads, in one-letter code: Peptidoglycan-associated lipoprotein (176 aa).

The signal sequence occupies residues 1-32; that stretch reads MSRIDTPAASRMQTIARNPVMIALVMTLALAG. Residue C33 is the site of N-palmitoyl cysteine attachment. C33 is lipidated: S-diacylglycerol cysteine. One can recognise an OmpA-like domain in the interval 58-175; the sequence is QQDFTVNVGD…RAVTVLGGAG (118 aa).

This sequence belongs to the Pal lipoprotein family. In terms of assembly, the Tol-Pal system is composed of five core proteins: the inner membrane proteins TolA, TolQ and TolR, the periplasmic protein TolB and the outer membrane protein Pal. They form a network linking the inner and outer membranes and the peptidoglycan layer.

It is found in the cell outer membrane. In terms of biological role, part of the Tol-Pal system, which plays a role in outer membrane invagination during cell division and is important for maintaining outer membrane integrity. The protein is Peptidoglycan-associated lipoprotein of Rhizobium meliloti (strain 1021) (Ensifer meliloti).